The chain runs to 89 residues: Large ribosomal subunit protein eL34 (89 aa).

A disordered region spans residues 41 to 69 (RPLNGVPRGRPSELRKLPKTAKRPERPYP). Residues 50–66 (RPSELRKLPKTAKRPER) show a composition bias toward basic and acidic residues.

The protein belongs to the eukaryotic ribosomal protein eL34 family.

The chain is Large ribosomal subunit protein eL34 from Thermococcus gammatolerans (strain DSM 15229 / JCM 11827 / EJ3).